The sequence spans 422 residues: Carboxypeptidase B2 (422 aa).

The N-terminal stretch at 1–21 is a signal peptide; the sequence is MKLHGLGILVAIILYEQHGFA. A propeptide spans 22 to 113 (activation peptide); it reads FQSGQVLSAL…QTFNDTVSPR (92 aa). Residues Asn43, Asn72, Asn84, and Asn107 are each glycosylated (N-linked (GlcNAc...) asparagine). In terms of domain architecture, Peptidase M14 spans 121–418; the sequence is QYHSLNEIYS…AAISKIVWHV (298 aa). Residues Cys177 and Cys190 are joined by a disulfide bond. His180 and Glu183 together coordinate Zn(2+). Residues 180–183 and Arg238 contribute to the substrate site; that span reads HARE. Asn240 carries N-linked (GlcNAc...) asparagine glycosylation. Cystine bridges form between Cys249/Cys273 and Cys264/Cys278. 255-256 lines the substrate pocket; the sequence is NR. Residue His309 coordinates Zn(2+). 310–311 serves as a coordination point for substrate; that stretch reads SY. Residue Asn322 is glycosylated (N-linked (GlcNAc...) asparagine). Substrate is bound at residue Tyr362. Glu384 serves as the catalytic Proton donor/acceptor.

Belongs to the peptidase M14 family. Zn(2+) serves as cofactor. As to expression, plasma; synthesized in the liver.

The protein localises to the secreted. The catalysed reaction is Release of C-terminal Arg and Lys from a polypeptide.. With respect to regulation, TAFI/CPB2 is unique among carboxypeptidases in that it spontaneously inactivates with a short half-life, a property that is crucial for its role in controlling blood clot lysis. The zymogen is stabilized by interactions with the activation peptide. Release of the activation peptide increases a dynamic flap mobility and in time this leads to conformational changes that disrupt the catalytic site and expose a cryptic thrombin-cleavage site present at Arg-323. Its function is as follows. Cleaves C-terminal arginine or lysine residues from biologically active peptides such as kinins or anaphylatoxins in the circulation thereby regulating their activities. Down-regulates fibrinolysis by removing C-terminal lysine residues from fibrin that has already been partially degraded by plasmin. In Mus musculus (Mouse), this protein is Carboxypeptidase B2 (Cpb2).